The following is a 679-amino-acid chain: Biosynthetic arginine decarboxylase (679 aa).

The disordered stretch occupies residues 1 to 43 (MKHRGQEEMGVESTATSDEVVKVPANGNKLEGKNHKQKKLLPT). Residue Lys-149 is modified to N6-(pyridoxal phosphate)lysine. 331–341 (LDVGGGLGVDY) serves as a coordination point for substrate.

Belongs to the Orn/Lys/Arg decarboxylase class-II family. SpeA subfamily. It depends on Mg(2+) as a cofactor. Pyridoxal 5'-phosphate is required as a cofactor.

The catalysed reaction is L-arginine + H(+) = agmatine + CO2. Its function is as follows. Catalyzes the biosynthesis of agmatine from arginine. This Nostoc sp. (strain PCC 7120 / SAG 25.82 / UTEX 2576) protein is Biosynthetic arginine decarboxylase.